A 128-amino-acid chain; its full sequence is Large ribosomal subunit protein uL22 (128 aa).

It belongs to the universal ribosomal protein uL22 family. Part of the 50S ribosomal subunit.

Its function is as follows. This protein binds specifically to 23S rRNA; its binding is stimulated by other ribosomal proteins, e.g. L4, L17, and L20. It is important during the early stages of 50S assembly. It makes multiple contacts with different domains of the 23S rRNA in the assembled 50S subunit and ribosome. The globular domain of the protein is located near the polypeptide exit tunnel on the outside of the subunit, while an extended beta-hairpin is found that lines the wall of the exit tunnel in the center of the 70S ribosome. This chain is Large ribosomal subunit protein uL22, found in Prochlorococcus marinus (strain MIT 9312).